The sequence spans 352 residues: UDP-N-acetylglucosamine--N-acetylmuramyl-(pentapeptide) pyrophosphoryl-undecaprenol N-acetylglucosamine transferase (352 aa).

UDP-N-acetyl-alpha-D-glucosamine-binding residues include serine 195 and glutamine 287.

It belongs to the glycosyltransferase 28 family. MurG subfamily.

The protein localises to the cell membrane. It carries out the reaction Mur2Ac(oyl-L-Ala-gamma-D-Glu-L-Lys-D-Ala-D-Ala)-di-trans,octa-cis-undecaprenyl diphosphate + UDP-N-acetyl-alpha-D-glucosamine = beta-D-GlcNAc-(1-&gt;4)-Mur2Ac(oyl-L-Ala-gamma-D-Glu-L-Lys-D-Ala-D-Ala)-di-trans,octa-cis-undecaprenyl diphosphate + UDP + H(+). It functions in the pathway cell wall biogenesis; peptidoglycan biosynthesis. Its function is as follows. Cell wall formation. Catalyzes the transfer of a GlcNAc subunit on undecaprenyl-pyrophosphoryl-MurNAc-pentapeptide (lipid intermediate I) to form undecaprenyl-pyrophosphoryl-MurNAc-(pentapeptide)GlcNAc (lipid intermediate II). This chain is UDP-N-acetylglucosamine--N-acetylmuramyl-(pentapeptide) pyrophosphoryl-undecaprenol N-acetylglucosamine transferase, found in Streptococcus pneumoniae (strain JJA).